We begin with the raw amino-acid sequence, 540 residues long: Esterase B1 (540 aa).

A disulfide bridge connects residues cysteine 68 and cysteine 81. The Acyl-ester intermediate role is filled by serine 191. Active-site charge relay system residues include glutamate 324 and histidine 442. The N-linked (GlcNAc...) asparagine glycan is linked to asparagine 452.

The protein belongs to the type-B carboxylesterase/lipase family.

The catalysed reaction is a carboxylic ester + H2O = an alcohol + a carboxylate + H(+). Its function is as follows. Overproduction of nonspecific esterases is a common mechanism of resistance to organophosphate insecticides. This Culex pipiens (House mosquito) protein is Esterase B1 (B1).